The chain runs to 225 residues: Increased recombination centers protein 22 (225 aa).

The N-terminal stretch at 1–24 (MRFFMLIGFNLLTALSSFCAAISA) is a signal peptide. Residues 25–169 (NNSDNVEHEQ…PTLFEIVSPP (145 aa)) lie on the Lumenal side of the membrane. Residues 170–190 (ISFFNPQFLSVQVIFLAIIGG) form a helical membrane-spanning segment. At 191–225 (VSYYYMKSKTNQRPSKKSATVKKVDESWLPETYKK) the chain is on the cytoplasmic side. The segment at 203–225 (RPSKKSATVKKVDESWLPETYKK) is disordered. Residues 212–225 (KKVDESWLPETYKK) are compositionally biased toward basic and acidic residues.

This sequence belongs to the IRC22 family.

The protein resides in the endoplasmic reticulum membrane. Is probably involved in a pathway contributing to genomic integrity. The protein is Increased recombination centers protein 22 (IRC22) of Saccharomyces cerevisiae (strain AWRI1631) (Baker's yeast).